We begin with the raw amino-acid sequence, 536 residues long: Testis-specific protein 10-interacting protein (536 aa).

3 disordered regions span residues 1–94, 185–234, and 246–305; these read MLNT…LFSS, SQGL…PGQG, and MEEE…FKGP. Residues 48–64 show a composition bias toward low complexity; sequence SGDSLQSQSCQQQRSYS. Over residues 71-83 the composition is skewed to basic residues; it reads KERKPRRRNKKGR. Residues 375–451 are a coiled coil; it reads QAWEQQQLKE…LQGIQHRVQA (77 aa). A disordered region spans residues 491–536; sequence GNAEGIPRKHRSYRSFGVEMESSPQSPPKTEPTSSQPGRHPSPTLD.

In Rattus norvegicus (Rat), this protein is Testis-specific protein 10-interacting protein (Tsga10ip).